The sequence spans 217 residues: Small ribosomal subunit protein uS3 (217 aa).

One can recognise a KH type-2 domain in the interval 40–110 (IRELVNKSFT…EVYINIHEVR (71 aa)).

Belongs to the universal ribosomal protein uS3 family. As to quaternary structure, part of the 30S ribosomal subunit. Forms a tight complex with proteins S10 and S14.

Its function is as follows. Binds the lower part of the 30S subunit head. Binds mRNA in the 70S ribosome, positioning it for translation. This chain is Small ribosomal subunit protein uS3, found in Rickettsia bellii (strain OSU 85-389).